The sequence spans 536 residues: Methyl-accepting chemotaxis aspartate transducer (536 aa).

The Cytoplasmic segment spans residues 1 to 10 (MFNRIRISTS). Residues 11–31 (LFLLLISFCIMQLISTGLSYV) traverse the membrane as a helical segment. The Periplasmic segment spans residues 32 to 188 (ALRADNHNLE…ASSQQAYGWS (157 aa)). The segment at 64–73 (RNTLNRAGTR) is the 3 Arg may form a positively charged pocket, which binds the alpha-carboxyl group of the attractant AA. Residues 189–209 (IWLVAGAVLMLLVVTLSAMWW) traverse the membrane as a helical segment. Topologically, residues 210 to 536 (LRTMLVQPLN…VKETLDCQTA (327 aa)) are cytoplasmic. The region spanning 212-264 (TMLVQPLNIIRGHFERIASGDLSAPIEVYGRNEISQLFASLQRMQQSLIGTVG) is the HAMP domain. Residues 269–498 (GAESILIGLQ…ESASAAAALE (230 aa)) form the Methyl-accepting transducer domain. Position 293 is a glutamate methyl ester (Gln) (Gln293). Position 300 is a glutamate methyl ester (Glu) (Glu300). Gln307 is subject to Glutamate methyl ester (Gln). Glutamate methyl ester (Glu) is present on residues Glu489 and Glu498.

This sequence belongs to the methyl-accepting chemotaxis (MCP) protein family.

Its subcellular location is the cell inner membrane. This protein responds to changes in Asp concentration in the environment, transduces a signal from the outside to the inside of the cell, and facilitates sensory adaptation through various levels of methylation. In terms of biological role, chemotactic-signal transducers respond to changes in the concentration of attractants and repellents in the environment, transduce a signal from the outside to the inside of the cell, and facilitate sensory adaptation through the variation of the level of methylation. Attractants increase the level of methylation while repellents decrease the level of methylation, the methyl groups are added by the methyltransferase CheR and removed by the methylesterase CheB. This chain is Methyl-accepting chemotaxis aspartate transducer (tas), found in Klebsiella aerogenes (strain ATCC 13048 / DSM 30053 / CCUG 1429 / JCM 1235 / KCTC 2190 / NBRC 13534 / NCIMB 10102 / NCTC 10006 / CDC 819-56) (Enterobacter aerogenes).